The sequence spans 529 residues: Zinc finger protein 490 (529 aa).

Positions M1–Q53 are disordered. The KRAB domain maps to I57–P132. C2H2-type zinc fingers lie at residues C156 to H178, H194 to H216, Y222 to H244, Y250 to H272, Y278 to H300, Y306 to H328, F334 to H356, Y362 to H384, Y390 to H412, Y418 to H440, Y446 to H468, C474 to H496, and F502 to H524.

Belongs to the krueppel C2H2-type zinc-finger protein family.

It is found in the nucleus. Its function is as follows. May be involved in transcriptional regulation. This chain is Zinc finger protein 490 (ZNF490), found in Homo sapiens (Human).